A 372-amino-acid chain; its full sequence is MKIGIPREIKNNENRVGLSPSGVHALVESGHTVLVETNAGSGSFFEDVDYKEAGAEIVAEQAKVWDVDMVIKVKEPLESEYPYFKEGLVLFTYLHLANEEKLTQALIDRKVISIAYETVQLPDRSLPLLSPMSEVAGRMSAQVGAEFLQKLNGGMGILLGGVPGVPKGKVTIIGGGQAGTNAAKIALGLGADVTILDVNPKRLQQLDDLFGGRVHTIMSNPLNIELYVKQSDLVIGAVLIPGAKAPRLVTEDMIKQMKNGSVIIDIAIDQGGIFETTDKITTHDDPTYIKHGVVHYAVANMPGAVPRTSTLALNNATLPYALMLANKGYREAFKSNQPLSLGLNTYKGHVTNKGVAEAFEMEYKSVEEALQL.

Residue H95 is part of the active site. Residue 169–199 coordinates NAD(+); sequence KVTIIGGGQAGTNAAKIALGLGADVTILDVN.

It belongs to the AlaDH/PNT family.

The enzyme catalyses L-alanine + NAD(+) + H2O = pyruvate + NH4(+) + NADH + H(+). It participates in amino-acid degradation; L-alanine degradation via dehydrogenase pathway; NH(3) and pyruvate from L-alanine: step 1/1. Its function is as follows. May play a role in cell wall synthesis as L-alanine is an important constituent of the peptidoglycan layer. The sequence is that of Alanine dehydrogenase 2 (ald2) from Staphylococcus aureus (strain COL).